The chain runs to 246 residues: UDP-N-acetyl-D-mannosaminuronic acid transferase (246 aa).

This sequence belongs to the glycosyltransferase 26 family.

It catalyses the reaction UDP-N-acetyl-alpha-D-mannosaminouronate + N-acetyl-alpha-D-glucosaminyl-di-trans,octa-cis-undecaprenyl diphosphate = beta-D-ManNAcA-(1-&gt;4)-alpha-D-GlcNAc-di-trans,octa-cis-undecaprenyl diphosphate + UDP + H(+). Its pathway is bacterial outer membrane biogenesis; enterobacterial common antigen biosynthesis. In terms of biological role, catalyzes the synthesis of Und-PP-GlcNAc-ManNAcA (Lipid II), the second lipid-linked intermediate involved in enterobacterial common antigen (ECA) synthesis. The protein is UDP-N-acetyl-D-mannosaminuronic acid transferase of Citrobacter koseri (strain ATCC BAA-895 / CDC 4225-83 / SGSC4696).